We begin with the raw amino-acid sequence, 276 residues long: Phosphatidylglycerol--prolipoprotein diacylglyceryl transferase (276 aa).

The next 3 membrane-spanning stretches (helical) occupy residues leucine 17–alanine 37, isoleucine 63–tyrosine 83, and isoleucine 95–serine 115. Residue arginine 146 coordinates a 1,2-diacyl-sn-glycero-3-phospho-(1'-sn-glycerol). A run of 3 helical transmembrane segments spans residues serine 182–alanine 202, glycine 209–phenylalanine 229, and phenylalanine 235–valine 255.

This sequence belongs to the Lgt family.

It is found in the cell inner membrane. It catalyses the reaction L-cysteinyl-[prolipoprotein] + a 1,2-diacyl-sn-glycero-3-phospho-(1'-sn-glycerol) = an S-1,2-diacyl-sn-glyceryl-L-cysteinyl-[prolipoprotein] + sn-glycerol 1-phosphate + H(+). The protein operates within protein modification; lipoprotein biosynthesis (diacylglyceryl transfer). Its function is as follows. Catalyzes the transfer of the diacylglyceryl group from phosphatidylglycerol to the sulfhydryl group of the N-terminal cysteine of a prolipoprotein, the first step in the formation of mature lipoproteins. The polypeptide is Phosphatidylglycerol--prolipoprotein diacylglyceryl transferase (Polaromonas sp. (strain JS666 / ATCC BAA-500)).